Consider the following 153-residue polypeptide: uncharacterized protein (153 aa).

Disordered regions lie at residues 30–66 (GPTV…RKGD) and 79–153 (IKEN…DYDD). The span at 45–56 (EDSDGSDKEDEQ) shows a compositional bias: acidic residues. 2 stretches are compositionally biased toward polar residues: residues 106–116 (GDTTSGVNACS) and 130–144 (GTKS…SSLL).

This is an uncharacterized protein from Xenopus laevis (African clawed frog).